The primary structure comprises 84 residues: Delta-stichotoxin-Sgt3a (84 aa).

A signal peptide spans 1–19 (MAYLKIVLVALMLVVAVSA). The propeptide occupies 20-33 (MRLSDQEDQDISVA). Disulfide bonds link Cys-38–Cys-78, Cys-40–Cys-68, and Cys-61–Cys-79. Gly-84 is a propeptide.

It belongs to the sea anemone sodium channel inhibitory toxin family. Type II subfamily.

It localises to the secreted. The protein resides in the nematocyst. Binds specifically to voltage-gated sodium channels (Nav), thereby delaying their inactivation during signal transduction. In Stichodactyla gigantea (Giant carpet anemone), this protein is Delta-stichotoxin-Sgt3a.